The following is a 32-amino-acid chain: ilv operon leader peptide (32 aa).

This protein is involved in control of the biosynthesis of isoleucine, leucine, and valine. This chain is ilv operon leader peptide (ivbL), found in Escherichia coli (strain K12).